Reading from the N-terminus, the 435-residue chain is Adenylosuccinate synthetase (435 aa).

Residues 20–26 and 48–50 each bind GTP; these read GDEGKGK and GHT. The active-site Proton acceptor is aspartate 21. 2 residues coordinate Mg(2+): aspartate 21 and glycine 48. Residues 21–24, 46–49, threonine 134, arginine 148, glutamine 229, threonine 244, and arginine 308 contribute to the IMP site; these read DEGK and NAGH. The Proton donor role is filled by histidine 49. A substrate-binding site is contributed by 304–310; it reads TTTGRPR. GTP is bound by residues arginine 310, 336–338, and 422–424; these read KVD and SMG.

Belongs to the adenylosuccinate synthetase family. In terms of assembly, homodimer. Mg(2+) serves as cofactor.

The protein resides in the cytoplasm. It catalyses the reaction IMP + L-aspartate + GTP = N(6)-(1,2-dicarboxyethyl)-AMP + GDP + phosphate + 2 H(+). It participates in purine metabolism; AMP biosynthesis via de novo pathway; AMP from IMP: step 1/2. Plays an important role in the de novo pathway of purine nucleotide biosynthesis. Catalyzes the first committed step in the biosynthesis of AMP from IMP. The chain is Adenylosuccinate synthetase from Thermoplasma acidophilum (strain ATCC 25905 / DSM 1728 / JCM 9062 / NBRC 15155 / AMRC-C165).